Here is a 181-residue protein sequence, read N- to C-terminus: Adenine phosphoribosyltransferase (181 aa).

Belongs to the purine/pyrimidine phosphoribosyltransferase family. As to quaternary structure, homodimer.

Its subcellular location is the cytoplasm. It carries out the reaction AMP + diphosphate = 5-phospho-alpha-D-ribose 1-diphosphate + adenine. It functions in the pathway purine metabolism; AMP biosynthesis via salvage pathway; AMP from adenine: step 1/1. In terms of biological role, catalyzes a salvage reaction resulting in the formation of AMP, that is energically less costly than de novo synthesis. This Methylobacterium sp. (strain 4-46) protein is Adenine phosphoribosyltransferase.